Consider the following 252-residue polypeptide: ATP synthase subunit a (252 aa).

6 helical membrane-spanning segments follow: residues 29-49, 87-107, 117-137, 146-166, 196-216, and 219-239; these read FTNVSFFIVATVVVSSVFLFI, FFPLVFSLFTFILVANFIGLF, IMITFSLAMLVIFTVISYGFY, LFVPSGVPVLILPLVTMIEVI, FIVSMIGIGIMGVGGSILPLI, and VAITALEFLVAFLQAYVFTVL.

Belongs to the ATPase A chain family. F-type ATPases have 2 components, CF(1) - the catalytic core - and CF(0) - the membrane proton channel. CF(1) has five subunits: alpha(3), beta(3), gamma(1), delta(1), epsilon(1). CF(0) has three main subunits: a(1), b(2) and c(9-12). The alpha and beta chains form an alternating ring which encloses part of the gamma chain. CF(1) is attached to CF(0) by a central stalk formed by the gamma and epsilon chains, while a peripheral stalk is formed by the delta and b chains.

The protein resides in the cell inner membrane. Its function is as follows. Key component of the proton channel; it plays a direct role in the translocation of protons across the membrane. The chain is ATP synthase subunit a from Bartonella henselae (strain ATCC 49882 / DSM 28221 / CCUG 30454 / Houston 1) (Rochalimaea henselae).